The primary structure comprises 180 residues: Oligoribonuclease (180 aa).

The Exonuclease domain occupies 7 to 170 (LIWIDLEMTG…DDIRESIAEL (164 aa)). Residue Tyr-128 is part of the active site.

It belongs to the oligoribonuclease family.

Its subcellular location is the cytoplasm. In terms of biological role, 3'-to-5' exoribonuclease specific for small oligoribonucleotides. The protein is Oligoribonuclease of Pseudomonas fluorescens (strain ATCC BAA-477 / NRRL B-23932 / Pf-5).